A 27-amino-acid polypeptide reads, in one-letter code: Protamine-A (27 aa).

The tract at residues 1-27 (ARRRRRHASTKLKRRRRRRRHGKKSHK) is disordered.

As to expression, testis.

Its subcellular location is the nucleus. It localises to the chromosome. Functionally, protamines substitute for histones in the chromatin of sperm during the haploid phase of spermatogenesis. They compact sperm DNA into a highly condensed, stable and inactive complex. The sequence is that of Protamine-A from Acipenser stellatus (Sevruga).